A 502-amino-acid chain; its full sequence is Glycerol kinase (502 aa).

T14 is an ADP binding site. ATP contacts are provided by T14, T15, and S16. A sn-glycerol 3-phosphate-binding site is contributed by T14. R18 provides a ligand contact to ADP. 4 residues coordinate sn-glycerol 3-phosphate: R84, E85, Y136, and D246. Positions 84, 85, 136, 246, and 247 each coordinate glycerol. Residues T268 and G311 each contribute to the ADP site. ATP contacts are provided by T268, G311, Q315, and G412. ADP is bound by residues G412 and N416.

The protein belongs to the FGGY kinase family. As to quaternary structure, homotetramer and homodimer (in equilibrium). Heterodimer with EIIA-Glc. Binds 1 zinc ion per glycerol kinase EIIA-Glc dimer. The zinc ion is important for dimerization.

It carries out the reaction glycerol + ATP = sn-glycerol 3-phosphate + ADP + H(+). Its pathway is polyol metabolism; glycerol degradation via glycerol kinase pathway; sn-glycerol 3-phosphate from glycerol: step 1/1. With respect to regulation, activity of this regulatory enzyme is affected by several metabolites. Allosterically and non-competitively inhibited by fructose 1,6-bisphosphate (FBP) and unphosphorylated phosphocarrier protein EIIA-Glc (III-Glc), an integral component of the bacterial phosphotransferase (PTS) system. Key enzyme in the regulation of glycerol uptake and metabolism. Catalyzes the phosphorylation of glycerol to yield sn-glycerol 3-phosphate. This Shigella boydii serotype 18 (strain CDC 3083-94 / BS512) protein is Glycerol kinase.